Consider the following 202-residue polypeptide: Nucleoside triphosphate pyrophosphatase (202 aa).

The active-site Proton acceptor is Asp79.

This sequence belongs to the Maf family. A divalent metal cation serves as cofactor.

The protein localises to the cytoplasm. The catalysed reaction is a ribonucleoside 5'-triphosphate + H2O = a ribonucleoside 5'-phosphate + diphosphate + H(+). The enzyme catalyses a 2'-deoxyribonucleoside 5'-triphosphate + H2O = a 2'-deoxyribonucleoside 5'-phosphate + diphosphate + H(+). Nucleoside triphosphate pyrophosphatase. May have a dual role in cell division arrest and in preventing the incorporation of modified nucleotides into cellular nucleic acids. The chain is Nucleoside triphosphate pyrophosphatase from Rhodopseudomonas palustris (strain ATCC BAA-98 / CGA009).